An 875-amino-acid chain; its full sequence is DNA gyrase subunit A (875 aa).

The region spanning 34–533 (LPDVRDGLKP…NSADINLEDL (500 aa)) is the Topo IIA-type catalytic domain. Tyrosine 122 serves as the catalytic O-(5'-phospho-DNA)-tyrosine intermediate. The short motif at 560–566 (QRRGGKG) is the GyrA-box element. Positions 841–875 (EPVDEEDLDTIDGSAAEGDDEIAPEVDVDDEPEEE) are disordered. A compositionally biased stretch (acidic residues) spans 857-875 (EGDDEIAPEVDVDDEPEEE).

It belongs to the type II topoisomerase GyrA/ParC subunit family. As to quaternary structure, heterotetramer, composed of two GyrA and two GyrB chains. In the heterotetramer, GyrA contains the active site tyrosine that forms a transient covalent intermediate with DNA, while GyrB binds cofactors and catalyzes ATP hydrolysis.

Its subcellular location is the cytoplasm. It carries out the reaction ATP-dependent breakage, passage and rejoining of double-stranded DNA.. Functionally, a type II topoisomerase that negatively supercoils closed circular double-stranded (ds) DNA in an ATP-dependent manner to modulate DNA topology and maintain chromosomes in an underwound state. Negative supercoiling favors strand separation, and DNA replication, transcription, recombination and repair, all of which involve strand separation. Also able to catalyze the interconversion of other topological isomers of dsDNA rings, including catenanes and knotted rings. Type II topoisomerases break and join 2 DNA strands simultaneously in an ATP-dependent manner. The polypeptide is DNA gyrase subunit A (Shigella flexneri).